The primary structure comprises 350 residues: C4-dicarboxylate-binding protein DctB (350 aa).

The first 18 residues, 1–18 (MKSLLACLALMIAGIATA), serve as a signal peptide directing secretion.

It belongs to the bacterial solute-binding protein 7 family.

It localises to the secreted. Part of the binding-protein-dependent transport system for uptake of C4-dicarboxylates. Responsible for growth on fumarate and succinate but not malate. Is not directly involved in C4-dicarboxylate uptake, but plays a sensory role in the DctS/DctR two-component system which regulates the expression of the dctA C4-dicarboxylate transporter. The sequence is that of C4-dicarboxylate-binding protein DctB (dctB) from Bacillus subtilis (strain 168).